The following is a 295-amino-acid chain: Putative aquaporin-12B (295 aa).

At 1–22 (MAGLNVSLSFFFATFTLCEAAR) the chain is on the cytoplasmic side. Residues 23 to 41 (RASKALLPVGAYEVFAREA) traverse the membrane as a helical segment. At 42–55 (MRTLVELGPWAGDF) the chain is on the extracellular side. Residues 56–74 (GPDLLLTLLFLLFLAHGVT) traverse the membrane as a helical segment. Residues 75 to 76 (LD) are Cytoplasmic-facing. The segment at residues 77 to 114 (GASANPTVSLQEFLMAEESLPGTLLKLAAQGLGMQAAC) is an intramembrane region (discontinuously helical). The short motif at 81–83 (NPT) is the NPA 1 element. At 115 to 120 (TLTRLC) the chain is on the cytoplasmic side. A helical membrane pass occupies residues 121-142 (WAWELSDLHLLQSLMAQSCSSA). Residues 143 to 145 (LRT) lie on the Extracellular side of the membrane. Residues 146 to 166 (SVPHGALVEAACAFCFHLTLL) form a helical membrane-spanning segment. Topologically, residues 167–174 (HLRHSPPA) are cytoplasmic. The chain crosses the membrane as a helical span at residues 175 to 191 (YSGPAVALLVTVTAYTA). Topologically, residues 192 to 194 (GPF) are extracellular. Positions 195 to 206 (TSAFFNPALAAS) form an intramembrane region, discontinuously helical. The short motif at 200-202 (NPA) is the NPA 2 element. Over 207–223 (VTFACSGHTLLEYVQVY) the chain is Extracellular. Residues 224-244 (WLGPLTGMVLAVLLHQGRLPH) form a helical membrane-spanning segment. The Cytoplasmic portion of the chain corresponds to 245-295 (LFQRNLFYGQKNKYRAPRGKPAPASGDTQTPAKGSSVREPGRSGVEGPHSS). Positions 257-295 (KYRAPRGKPAPASGDTQTPAKGSSVREPGRSGVEGPHSS) are disordered.

The protein belongs to the MIP/aquaporin (TC 1.A.8) family. AQP11/AQP12 subfamily. As to quaternary structure, homotetramer; each monomer provides an independent water pore.

Its subcellular location is the membrane. It carries out the reaction H2O(in) = H2O(out). Its function is as follows. Putative aquaporin. Could form homotetrameric transmembrane channels, with each monomer independently mediating water transport across the plasma membrane along its osmotic gradient. This chain is Putative aquaporin-12B, found in Homo sapiens (Human).